Reading from the N-terminus, the 152-residue chain is Ribonuclease H (152 aa).

The RNase H type-1 domain maps to 1 to 142 (MDSKVVIYTD…ADKLAVQGRE (142 aa)). Mg(2+) is bound by residues D10, E48, D70, and D134.

It belongs to the RNase H family. Monomer. Mg(2+) serves as cofactor.

The protein localises to the cytoplasm. It carries out the reaction Endonucleolytic cleavage to 5'-phosphomonoester.. In terms of biological role, endonuclease that specifically degrades the RNA of RNA-DNA hybrids. The sequence is that of Ribonuclease H from Rickettsia felis (strain ATCC VR-1525 / URRWXCal2) (Rickettsia azadi).